The sequence spans 89 residues: MATAAAAKEDVAHRFAKDQLKAIIERIERLEEEKKTISDDIRDVYAEAKGNGFDVKALRTIVRMRKQDANEREEQETILETYMQALGML.

Belongs to the UPF0335 family.

This chain is UPF0335 protein OCAR_5086/OCA5_c28780, found in Afipia carboxidovorans (strain ATCC 49405 / DSM 1227 / KCTC 32145 / OM5) (Oligotropha carboxidovorans).